We begin with the raw amino-acid sequence, 183 residues long: MKVLIVALALLALAASAASSTSGGCGCQTPPFHLPPPFYMPPPFYLPPQQQPQPWQYPTQPPQLSPCQQFGSCGVGSVGSPFLGQCVEFLRHQCSPAATPYGSPQCQALQQQCCHQIRQVEPLHRYQATYGVVLQSFLQQQPQGELAALMAAQVAQQLTAMCGLQLQQPGPCPCNAAAGGVYY.

Residues 1–19 (MKVLIVALALLALAASAAS) form the signal peptide.

As to quaternary structure, interacts with OP10 (via N-terminus).

It localises to the vacuole. The protein localises to the aleurone grain. Functionally, zeins are major seed storage proteins. The protein is 16 kDa gamma-zein of Zea mays (Maize).